Reading from the N-terminus, the 358-residue chain is Alanine racemase (358 aa).

Residue K35 is the Proton acceptor; specific for D-alanine of the active site. K35 bears the N6-(pyridoxal phosphate)lysine mark. A substrate-binding site is contributed by R130. Y255 (proton acceptor; specific for L-alanine) is an active-site residue. M303 lines the substrate pocket.

Belongs to the alanine racemase family. Pyridoxal 5'-phosphate serves as cofactor.

The catalysed reaction is L-alanine = D-alanine. It functions in the pathway amino-acid biosynthesis; D-alanine biosynthesis; D-alanine from L-alanine: step 1/1. Catalyzes the interconversion of L-alanine and D-alanine. May also act on other amino acids. In Shewanella baltica (strain OS195), this protein is Alanine racemase (alr).